The sequence spans 273 residues: SET domain-containing protein 9 (273 aa).

One can recognise an SET domain in the interval 96–269; the sequence is FSVAQATSSL…QGEELFSNYY (174 aa). Tyr-268 provides a ligand contact to S-adenosyl-L-methionine.

It belongs to the class V-like SAM-binding methyltransferase superfamily.

In Pongo abelii (Sumatran orangutan), this protein is SET domain-containing protein 9 (SETD9).